A 480-amino-acid polypeptide reads, in one-letter code: Cytochrome P450 724B1 (480 aa).

A helical transmembrane segment spans residues 6–26 (LVLAALVILLALLLTLVLSHF). Position 426 (C426) interacts with heme.

Belongs to the cytochrome P450 family. Heme is required as a cofactor. In terms of tissue distribution, ubiquitously expressed at low levels, but preferentially in the internodes and the florets before flowering.

It localises to the membrane. It catalyses the reaction campesterol + reduced [NADPH--hemoprotein reductase] + O2 = (22S)-22-hydroxycampesterol + oxidized [NADPH--hemoprotein reductase] + H2O + H(+). Its pathway is plant hormone biosynthesis; brassinosteroid biosynthesis. Its function is as follows. Involved in brassinosteroid biosynthesis. May catalyze a C6-oxidation step and may be involved to supply 6-deoxotyphasterol and typhasterol. Involved in internode elongation and seed development. Catalyzes the conversion of campesterol (CR) to (22S)-22-hydroxycampesterol (22-OHCR, 22-hydroxyCR). The sequence is that of Cytochrome P450 724B1 from Oryza sativa subsp. japonica (Rice).